The chain runs to 112 residues: ATP synthase epsilon chain (112 aa).

It belongs to the ATPase epsilon chain family. F-type ATPases have 2 components, CF(1) - the catalytic core - and CF(0) - the membrane proton channel. CF(1) has five subunits: alpha(3), beta(3), gamma(1), delta(1), epsilon(1). CF(0) has three main subunits: a, b and c.

It localises to the cell inner membrane. Produces ATP from ADP in the presence of a proton gradient across the membrane. In Rickettsia felis (strain ATCC VR-1525 / URRWXCal2) (Rickettsia azadi), this protein is ATP synthase epsilon chain.